The primary structure comprises 409 residues: FAD-dependent monooxygenase phnB (409 aa).

FAD contacts are provided by Glu35, Ala50, Arg110, and Asp311.

This sequence belongs to the paxM FAD-dependent monooxygenase family. FAD is required as a cofactor.

It catalyses the reaction 3,6,7,9-tetrahydroxy-3-methyl-2,3-dihydro-1H-naphtho[2,1-b]pyran-1-one + NADPH + O2 + H(+) = 2,3,4,7,9-pentahydroxy-6-methyl-1H-phenalen-1-one + NADP(+) + 2 H2O. The protein operates within secondary metabolite biosynthesis. Functionally, FAD-dependent monooxygenase; part of the gene cluster that mediates the biosynthesis of phenalenones such as herqueinone, compounds that have been reported to treat tumors, bacterial infections and/or mycoses, and rheumatic diseases. The non-reducing polyketide synthase phnA synthesizes the heptaketide backbone and cyclizes it into the angular, hemiketal-containing naphtho-gamma-pyrone prephenalenone. The product template (PT) domain of phnA catalyzes only the C4-C9 aldol condensation, which is unprecedented among known PT domains. The transformation of prephenalenone to phenalenones requires an FAD-dependent monooxygenase phnB, which catalyzes the C2 aromatic hydroxylation of prephenalenone and ring opening of the gamma-pyrone ring simultaneously. Subsequent intramolecular deprotonation of C3 phenolic oxygen accelerates phenalenone ring closure to yield the tricyclic phenalenone core with a C2 hydroxylation. The prenyltransferase phnF further catalyzes reverse C-prenylation of phenalenone by direct electrophilic substitution at C6, or possibly via first a forward O-prenylation of a neighboring phenol in phenalenone, followed by a Claisen rearrangement. The hydroalkoxylation enzyme phnH catalyzes the 5-exo-trig cyclization via acid catalysis after the spontaneous deprotonation of 7-OH, which leads to the formation of the dihydrobenzofuran atrovenetin. Atrovenetin is further converted to deoxyherqueinone by the O-methyltransferase phnC which can methylate C2-OH to stabilize the northern portion of the phenalenone core. Finally, the oxidoreductase phnG converts deoxyherqueinone to herqueinone via C6 hydroxylation. The sequence is that of FAD-dependent monooxygenase phnB from Penicillium herquei.